The primary structure comprises 302 residues: Nudix hydrolase 5 (302 aa).

A Nudix hydrolase domain is found at 122–254 (SHRIGIGAFV…EGNEMFKLIA (133 aa)). The Nudix box motif lies at 159–180 (GTIKEGESIWAGAVREVKEETD). Positions 174 and 178 each coordinate Mg(2+).

The protein belongs to the Nudix hydrolase family. Requires Mg(2+) as cofactor. It depends on Mn(2+) as a cofactor. As to expression, expressed in roots, stems and leaves.

Probably mediates the hydrolysis of some nucleoside diphosphate derivatives. The chain is Nudix hydrolase 5 (NUDT5) from Arabidopsis thaliana (Mouse-ear cress).